The chain runs to 453 residues: Vitamin D3 receptor A (453 aa).

Positions 53–128 (PRICGVCGDK…IGMMKEFILT (76 aa)) form a DNA-binding region, nuclear receptor. Positions 56, 59, 73, 76, 92, 98, 108, and 111 each coordinate Zn(2+). NR C4-type zinc fingers lie at residues 56-76 (CGVC…CEGC) and 92-111 (CPFN…CQAC). Residues 129–158 (DEEVQRKKDLIMKRKEEEAAREARKPRLSD) form a hinge region. The NR LBD domain maps to 159-449 (EQMQIINSLV…LTPLVLEVFG (291 aa)). Residues Tyr175 and Ser265 each coordinate calcitriol. The interaction with coactivator LXXLL motif stretch occupies residues 274–292 (KMIPGFRDLTAEDQIALLK). Residues Arg302, Ser306, His333, and His423 each coordinate calcitriol. Residues 442–450 (PLVLEVFGS) carry the 9aaTAD motif.

This sequence belongs to the nuclear hormone receptor family. NR1 subfamily. In terms of assembly, homodimer in the absence of bound vitamin D3. Heterodimer with RXRA after vitamin D3 binding. Interacts with ncoa1 and possibly other coactivators, leading to a strong increase of transcription of target genes. Detected in embryo 24 to 48 hours after fertilization and in gastrula.

The protein localises to the nucleus. It localises to the cytoplasm. Functionally, nuclear receptor for calcitriol, the active form of vitamin D3 which mediates the action of this vitamin on cells. Enters the nucleus upon vitamin D3 binding where it forms heterodimers with the retinoid X receptor/RXR. The VDR-RXR heterodimers bind to specific response elements on DNA and activate the transcription of vitamin D3-responsive target genes. Recruited to promoters via its interaction with BAZ1B/WSTF which mediates the interaction with acetylated histones, an essential step for VDR-promoter association. Plays a central role in calcium homeostasis. This is Vitamin D3 receptor A (vdra) from Danio rerio (Zebrafish).